Reading from the N-terminus, the 301-residue chain is Transcriptional activator FeaR (301 aa).

In terms of domain architecture, HTH araC/xylS-type spans 199 to 299 (QKVVTLIDDN…GMTPGEYRRK (101 aa)). 2 DNA-binding regions (H-T-H motif) span residues 217–238 (EWIA…ADKG) and 266–289 (LAGI…KQRF).

Functionally, positive regulator of tynA/maoA and feaB/padA, the genes for 2-phenylethylamine catabolism. The protein is Transcriptional activator FeaR (feaR) of Escherichia coli (strain K12).